The sequence spans 528 residues: Berberine bridge enzyme-like 17 (528 aa).

A signal peptide spans 1–19 (MKEVVYVLLLVLLVSVSDA). Residues N20, N35, N52, and N72 are each glycosylated (N-linked (GlcNAc...) asparagine). C32 and C94 are disulfide-bonded. Residues 69 to 246 (LNPNDTKLIA…LSWKINLVDV (178 aa)) enclose the FAD-binding PCMH-type domain. The segment at residues 109–171 (HDYEGLSFTS…KTLAFAGGVC (63 aa)) is a cross-link (6-(S-cysteinyl)-8alpha-(pros-histidyl)-FAD (His-Cys)). 3 N-linked (GlcNAc...) asparagine glycosylation sites follow: N256, N340, and N439.

It belongs to the oxygen-dependent FAD-linked oxidoreductase family. The cofactor is FAD. Post-translationally, the FAD cofactor is bound via a bicovalent 6-S-cysteinyl, 8alpha-N1-histidyl FAD linkage.

The protein resides in the secreted. The protein localises to the cell wall. This Arabidopsis thaliana (Mouse-ear cress) protein is Berberine bridge enzyme-like 17.